A 265-amino-acid chain; its full sequence is Mlc titration factor A (265 aa).

H111, H148, H152, and E211 together coordinate Zn(2+).

This sequence belongs to the MtfA family. In terms of assembly, interacts with Mlc. Requires Zn(2+) as cofactor.

It is found in the cytoplasm. Functionally, involved in the modulation of the activity of the glucose-phosphotransferase system (glucose-PTS). Interacts with the transcriptional repressor Mlc, preventing its interaction with DNA and leading to the modulation of expression of genes regulated by Mlc, including ptsG, which encodes the PTS system glucose-specific EIICB component. In terms of biological role, shows zinc-dependent metallopeptidase activity. This Escherichia coli O127:H6 (strain E2348/69 / EPEC) protein is Mlc titration factor A.